The chain runs to 122 residues: MIQQESELEVADNSGAKRVKCFKVLGGSKRRYAHVGDIVVASVQDAHPEGSVKKGDVVKVVIIRTKSYIKRKDGTKIRFDTNSCVLIDDKKNPKGTRIFGPVAREVRDRDFLKISSLAPEVI.

Belongs to the universal ribosomal protein uL14 family. As to quaternary structure, part of the 50S ribosomal subunit. Forms a cluster with proteins L3 and L19. In the 70S ribosome, L14 and L19 interact and together make contacts with the 16S rRNA in bridges B5 and B8.

Functionally, binds to 23S rRNA. Forms part of two intersubunit bridges in the 70S ribosome. This Protochlamydia amoebophila (strain UWE25) protein is Large ribosomal subunit protein uL14.